We begin with the raw amino-acid sequence, 147 residues long: Microsomal glutathione S-transferase 2 (147 aa).

A run of 3 helical transmembrane segments spans residues 6-26, 59-79, and 111-131; these read ILLA…ALQV, FYPI…QVFA, and SLGI…NSFL.

This sequence belongs to the MAPEG family. Homotrimer. In terms of tissue distribution, liver, spleen, skeletal muscle, heart, adrenals, pancreas, prostate, testis, fetal liver, and fetal spleen. Very low expression in lung, brain, placenta and bone marrow. Abundantly expressed in human umbilical vein endothelial cells (at protein level).

The protein localises to the endoplasmic reticulum membrane. It localises to the microsome membrane. It carries out the reaction RX + glutathione = an S-substituted glutathione + a halide anion + H(+). The catalysed reaction is 1-chloro-2,4-dinitrobenzene + glutathione = 2,4-dinitrophenyl-S-glutathione + chloride + H(+). The enzyme catalyses leukotriene C4 = leukotriene A4 + glutathione. It catalyses the reaction (5S)-hydroperoxy-(6E,8Z,11Z,14Z)-eicosatetraenoate + 2 glutathione = (5S)-hydroxy-(6E,8Z,11Z,14Z)-eicosatetraenoate + glutathione disulfide + H2O. Its activity is regulated as follows. Each monomer can bind on GSH molecule but only one subunit is catalytically active. Catalyzes several different glutathione-dependent reactions. Catalyzes the glutathione-dependent reduction of lipid hydroperoxides, such as 5-HPETE. Has glutathione transferase activity, toward xenobiotic electrophiles, such as 1-chloro-2, 4-dinitrobenzene (CDNB). Also catalyzes the conjugation of leukotriene A4 with reduced glutathione to form leukotriene C4 (LTC4). Involved in oxidative DNA damage induced by ER stress and anticancer agents by activating LTC4 biosynthetic machinery in nonimmune cells. The chain is Microsomal glutathione S-transferase 2 (MGST2) from Homo sapiens (Human).